Reading from the N-terminus, the 145-residue chain is MLNEFKAFIARGNVMDLAVGVIIGGAFGGIVKSLVDDLIMPIVGAIFGGFDFSNYFLPLSAAVNAQSLAAAREQGAVFAYGSFLTVLINFLILAWIIFLMVKGVNTMRAQIERQEKAAPEELPPPPADVQLLTEIRDLLARRPTA.

A run of 3 helical transmembrane segments spans residues 14 to 34, 38 to 58, and 81 to 101; these read VMDL…VKSL, LIMP…YFLP, and GSFL…FLMV.

Belongs to the MscL family. Homopentamer.

It localises to the cell inner membrane. Channel that opens in response to stretch forces in the membrane lipid bilayer. May participate in the regulation of osmotic pressure changes within the cell. This chain is Large-conductance mechanosensitive channel, found in Rhizobium johnstonii (strain DSM 114642 / LMG 32736 / 3841) (Rhizobium leguminosarum bv. viciae).